The sequence spans 205 residues: MIALVDYGGGNLKSVANAIHALGYEFTLTSDPKEILSAQAVILPGVGAAADTVAGLRAKGLDEAIKELVKRDIPLLAICVGMQVLFDSTEEGGQTKCLGILAGEVKRLPDGVKIPQMGWNQLKQRVSHPLFEGIPDGTDFYFVHSYYASPADRNIIGATTDYGVDFCSLVINKRLIATQFHPEKSGSYGLKLYQNFFKMALGDKK.

A Glutamine amidotransferase type-1 domain is found at 1 to 205 (MIALVDYGGG…FFKMALGDKK (205 aa)). C79 (nucleophile) is an active-site residue. Catalysis depends on residues H181 and E183.

Heterodimer of HisH and HisF.

The protein localises to the cytoplasm. The catalysed reaction is 5-[(5-phospho-1-deoxy-D-ribulos-1-ylimino)methylamino]-1-(5-phospho-beta-D-ribosyl)imidazole-4-carboxamide + L-glutamine = D-erythro-1-(imidazol-4-yl)glycerol 3-phosphate + 5-amino-1-(5-phospho-beta-D-ribosyl)imidazole-4-carboxamide + L-glutamate + H(+). The enzyme catalyses L-glutamine + H2O = L-glutamate + NH4(+). The protein operates within amino-acid biosynthesis; L-histidine biosynthesis; L-histidine from 5-phospho-alpha-D-ribose 1-diphosphate: step 5/9. In terms of biological role, IGPS catalyzes the conversion of PRFAR and glutamine to IGP, AICAR and glutamate. The HisH subunit catalyzes the hydrolysis of glutamine to glutamate and ammonia as part of the synthesis of IGP and AICAR. The resulting ammonia molecule is channeled to the active site of HisF. This chain is Imidazole glycerol phosphate synthase subunit HisH, found in Dehalococcoides mccartyi (strain CBDB1).